The following is a 135-amino-acid chain: Nucleoside diphosphate kinase (135 aa).

K9, F57, R85, T91, R102, and N112 together coordinate ATP. The active-site Pros-phosphohistidine intermediate is H115.

The protein belongs to the NDK family. As to quaternary structure, homotetramer. Requires Mg(2+) as cofactor.

The protein localises to the cytoplasm. The enzyme catalyses a 2'-deoxyribonucleoside 5'-diphosphate + ATP = a 2'-deoxyribonucleoside 5'-triphosphate + ADP. It carries out the reaction a ribonucleoside 5'-diphosphate + ATP = a ribonucleoside 5'-triphosphate + ADP. Functionally, major role in the synthesis of nucleoside triphosphates other than ATP. The ATP gamma phosphate is transferred to the NDP beta phosphate via a ping-pong mechanism, using a phosphorylated active-site intermediate. This is Nucleoside diphosphate kinase from Thermobifida fusca (strain YX).